The primary structure comprises 530 residues: DNA damage-binding protein cmr1 (530 aa).

2 disordered regions span residues 34 to 115 (VGLF…RKSD) and 224 to 250 (TKPV…LTTL). A compositionally biased stretch (basic residues) spans 52–62 (AKKKKPAPKKV). Residues 89 to 108 (EVAKRKADEHDAALQEAERA) show a composition bias toward basic and acidic residues. One copy of the WD 1 repeat lies at 188 to 229 (LTPERIYAMTFHPSESKPLIFAGDKMGHLGVLDASQTKPVSA). Over residues 233–244 (DEDEEDDDDDPD) the composition is skewed to acidic residues. 6 WD repeats span residues 252–292 (PHTR…SVER), 302–339 (VPIS…QDSA), 344–384 (LSDK…HKSP), 389–430 (EHES…ASWK), 453–496 (GRWV…LAQL), and 499–530 (DGIT…CLWM).

This sequence belongs to the WD repeat DDB2/WDR76 family.

DNA-binding protein that binds to both single- and double-stranded DNA. Binds preferentially to UV-damaged DNA. May be involved in DNA-metabolic processes. The chain is DNA damage-binding protein cmr1 from Aspergillus terreus (strain NIH 2624 / FGSC A1156).